The chain runs to 320 residues: Glyoxylate/hydroxypyruvate reductase B (320 aa).

Residues Arg-233 and Glu-262 contribute to the active site. His-281 (proton donor) is an active-site residue.

This sequence belongs to the D-isomer specific 2-hydroxyacid dehydrogenase family. GhrB subfamily. In terms of assembly, homodimer.

Its subcellular location is the cytoplasm. It catalyses the reaction glycolate + NADP(+) = glyoxylate + NADPH + H(+). The catalysed reaction is (R)-glycerate + NAD(+) = 3-hydroxypyruvate + NADH + H(+). It carries out the reaction (R)-glycerate + NADP(+) = 3-hydroxypyruvate + NADPH + H(+). In terms of biological role, catalyzes the NADPH-dependent reduction of glyoxylate and hydroxypyruvate into glycolate and glycerate, respectively. The chain is Glyoxylate/hydroxypyruvate reductase B from Pectobacterium carotovorum subsp. carotovorum (strain PC1).